Consider the following 477-residue polypeptide: Diphthine methyltransferase (477 aa).

WD repeat units lie at residues 194–232, 236–276, and 422–464; these read HFEA…TPVF, RHCM…QPLA, and VKTR…ARTL.

The protein belongs to the DPH7 family. Interacts with INCA1.

The enzyme catalyses diphthine methyl ester-[translation elongation factor 2] + H2O = diphthine-[translation elongation factor 2] + methanol + H(+). It participates in protein modification; peptidyl-diphthamide biosynthesis. In terms of biological role, catalyzes the demethylation of diphthine methyl ester to form diphthine, an intermediate diphthamide biosynthesis, a post-translational modification of histidine which occurs in translation elongation factor 2 (EEF2). The chain is Diphthine methyltransferase (Dph7) from Mus musculus (Mouse).